The following is a 284-amino-acid chain: WUSCHEL-related homeobox 10 (284 aa).

The segment at 1 to 43 is disordered; that stretch reads MDRTATASWEVMSRRGEQQQQLMMQAPASHNGGSGGGEPARSR. A DNA-binding region (homeobox; WUS-type) is located at residues 39 to 103; the sequence is PARSRWAPKP…NRRSRSRRRA (65 aa).

This sequence belongs to the WUS homeobox family.

Its subcellular location is the nucleus. Transcription factor which may be involved in developmental processes. In Oryza sativa subsp. japonica (Rice), this protein is WUSCHEL-related homeobox 10 (WOX10).